The primary structure comprises 403 residues: Phosphopentomutase (403 aa).

Mn(2+) is bound by residues Asp13, Asp298, His303, Asp339, His340, and His351.

Belongs to the phosphopentomutase family. It depends on Mn(2+) as a cofactor.

It is found in the cytoplasm. The catalysed reaction is 2-deoxy-alpha-D-ribose 1-phosphate = 2-deoxy-D-ribose 5-phosphate. The enzyme catalyses alpha-D-ribose 1-phosphate = D-ribose 5-phosphate. It participates in carbohydrate degradation; 2-deoxy-D-ribose 1-phosphate degradation; D-glyceraldehyde 3-phosphate and acetaldehyde from 2-deoxy-alpha-D-ribose 1-phosphate: step 1/2. Functionally, isomerase that catalyzes the conversion of deoxy-ribose 1-phosphate (dRib-1-P) and ribose 1-phosphate (Rib-1-P) to deoxy-ribose 5-phosphate (dRib-5-P) and ribose 5-phosphate (Rib-5-P), respectively. This Streptococcus pyogenes serotype M5 (strain Manfredo) protein is Phosphopentomutase.